Here is a 328-residue protein sequence, read N- to C-terminus: NADH-quinone oxidoreductase subunit H 1 (328 aa).

Helical transmembrane passes span 11–31 (VVKA…FLLF), 81–101 (LAPV…PWAP), 116–136 (VLVI…GGWA), 154–174 (ISYE…TGSV), 189–209 (LFPQ…EAGW), 235–257 (GLFF…TFFL), 269–289 (IPGF…LYWI), and 308–328 (VLLP…ALWA).

This sequence belongs to the complex I subunit 1 family. In terms of assembly, NDH-1 is composed of 14 different subunits. Subunits NuoA, H, J, K, L, M, N constitute the membrane sector of the complex.

Its subcellular location is the cell membrane. The enzyme catalyses a quinone + NADH + 5 H(+)(in) = a quinol + NAD(+) + 4 H(+)(out). Functionally, NDH-1 shuttles electrons from NADH, via FMN and iron-sulfur (Fe-S) centers, to quinones in the respiratory chain. The immediate electron acceptor for the enzyme in this species is believed to be ubiquinone. Couples the redox reaction to proton translocation (for every two electrons transferred, four hydrogen ions are translocated across the cytoplasmic membrane), and thus conserves the redox energy in a proton gradient. This subunit may bind ubiquinone. The polypeptide is NADH-quinone oxidoreductase subunit H 1 (Symbiobacterium thermophilum (strain DSM 24528 / JCM 14929 / IAM 14863 / T)).